We begin with the raw amino-acid sequence, 283 residues long: 4-diphosphocytidyl-2-C-methyl-D-erythritol kinase (283 aa).

Lys-11 is a catalytic residue. 94–104 contacts ATP; it reads PVAAGLAGGSA. The active site involves Asp-136.

It belongs to the GHMP kinase family. IspE subfamily.

The enzyme catalyses 4-CDP-2-C-methyl-D-erythritol + ATP = 4-CDP-2-C-methyl-D-erythritol 2-phosphate + ADP + H(+). The protein operates within isoprenoid biosynthesis; isopentenyl diphosphate biosynthesis via DXP pathway; isopentenyl diphosphate from 1-deoxy-D-xylulose 5-phosphate: step 3/6. In terms of biological role, catalyzes the phosphorylation of the position 2 hydroxy group of 4-diphosphocytidyl-2C-methyl-D-erythritol. This chain is 4-diphosphocytidyl-2-C-methyl-D-erythritol kinase, found in Acetivibrio thermocellus (strain ATCC 27405 / DSM 1237 / JCM 9322 / NBRC 103400 / NCIMB 10682 / NRRL B-4536 / VPI 7372) (Clostridium thermocellum).